Here is a 342-residue protein sequence, read N- to C-terminus: Ribosomal RNA small subunit methyltransferase H (342 aa).

Residues 36-38, Asp56, Phe82, Asp100, and Gln107 each bind S-adenosyl-L-methionine; that span reads GGH. Positions 311–342 are disordered; it reads GESGMGKGNSAAASRFPTADSPFPASANGDAA.

This sequence belongs to the methyltransferase superfamily. RsmH family.

It localises to the cytoplasm. It catalyses the reaction cytidine(1402) in 16S rRNA + S-adenosyl-L-methionine = N(4)-methylcytidine(1402) in 16S rRNA + S-adenosyl-L-homocysteine + H(+). Functionally, specifically methylates the N4 position of cytidine in position 1402 (C1402) of 16S rRNA. The polypeptide is Ribosomal RNA small subunit methyltransferase H (Xanthomonas axonopodis pv. citri (strain 306)).